Reading from the N-terminus, the 448-residue chain is Putative RNA-ligase (448 aa).

Belongs to the asfivirus M448R family.

Its subcellular location is the virion. This is Putative RNA-ligase from African swine fever virus (isolate Pig/Kenya/KEN-50/1950) (ASFV).